We begin with the raw amino-acid sequence, 652 residues long: DNA ligase (652 aa).

Residues 29 to 33 (DSDYD), 78 to 79 (SL), and Glu107 contribute to the NAD(+) site. Lys109 serves as the catalytic N6-AMP-lysine intermediate. NAD(+) is bound by residues Arg130, Glu164, Lys278, and Lys302. Residues Cys395, Cys398, Cys413, and Cys418 each coordinate Zn(2+). One can recognise a BRCT domain in the interval 577 to 652 (NSDAALFGLT…IEDEDWLRQL (76 aa)).

It belongs to the NAD-dependent DNA ligase family. LigA subfamily. It depends on Mg(2+) as a cofactor. Mn(2+) serves as cofactor.

It catalyses the reaction NAD(+) + (deoxyribonucleotide)n-3'-hydroxyl + 5'-phospho-(deoxyribonucleotide)m = (deoxyribonucleotide)n+m + AMP + beta-nicotinamide D-nucleotide.. Functionally, DNA ligase that catalyzes the formation of phosphodiester linkages between 5'-phosphoryl and 3'-hydroxyl groups in double-stranded DNA using NAD as a coenzyme and as the energy source for the reaction. It is essential for DNA replication and repair of damaged DNA. The sequence is that of DNA ligase from Streptococcus pyogenes serotype M49 (strain NZ131).